A 229-amino-acid chain; its full sequence is uncharacterized protein (229 aa).

Helical transmembrane passes span 1–21 (MFGT…GGIF), 32–52 (ILMQ…ITQH), 58–78 (YPIL…IINL), 100–120 (TAVL…EAAL), 139–159 (IVLA…LFSW), 178–198 (LINE…LSIL), and 206–226 (LNLL…HAFG).

The protein resides in the cell membrane. This is an uncharacterized protein from Bacillus subtilis (strain 168).